The primary structure comprises 377 residues: Homoserine O-succinyltransferase (377 aa).

The 309-residue stretch at 50–358 (NAILVCHALS…PSTYGHDSFL (309 aa)) folds into the AB hydrolase-1 domain. The active-site Nucleophile is serine 156. Arginine 226 serves as a coordination point for substrate. Active-site residues include aspartate 321 and histidine 354. Aspartate 355 contributes to the substrate binding site.

The protein belongs to the AB hydrolase superfamily. MetX family. Homodimer.

Its subcellular location is the cytoplasm. It catalyses the reaction L-homoserine + succinyl-CoA = O-succinyl-L-homoserine + CoA. Its pathway is amino-acid biosynthesis; L-methionine biosynthesis via de novo pathway; O-succinyl-L-homoserine from L-homoserine: step 1/1. In terms of biological role, transfers a succinyl group from succinyl-CoA to L-homoserine, forming succinyl-L-homoserine. This Nitrosomonas eutropha (strain DSM 101675 / C91 / Nm57) protein is Homoserine O-succinyltransferase.